The primary structure comprises 460 residues: Diguanylate cyclase DosC (460 aa).

A heme-binding site is contributed by His-98. The GGDEF domain occupies 325 to 458 (TPLSVLIIDV…GRNRVELWKA (134 aa)). Mg(2+) is bound at residue Asp-333. 2 residues coordinate substrate: Asn-341 and Asp-350. Mg(2+) is bound at residue Asp-376. The active-site Proton acceptor is Asp-376.

It depends on heme as a cofactor. Requires Mg(2+) as cofactor.

The catalysed reaction is 2 GTP = 3',3'-c-di-GMP + 2 diphosphate. The protein operates within purine metabolism; 3',5'-cyclic di-GMP biosynthesis. Globin-coupled heme-based oxygen sensor protein displaying diguanylate cyclase (DGC) activity in response to oxygen availability. Thus, catalyzes the synthesis of cyclic diguanylate (c-di-GMP) via the condensation of 2 GTP molecules. Cyclic-di-GMP is a second messenger which controls cell surface-associated traits in bacteria. This is Diguanylate cyclase DosC (dosC) from Shigella boydii serotype 4 (strain Sb227).